A 374-amino-acid chain; its full sequence is MKSSKKDIFILHIWLKLMGCYVFMFITSVVLPIAAMFPNLGFPCYYNTLVDYSKLNLREKNQAQHLTPTLFLEAPEMFFYVTYSFIVDCCSLVYYALAAVAVVKAKKHAPGLMALSQWIMAVGSPTLLYMAVLKLWTIQLYIHTLSYKHIYLAAFVYCLHWLLSMVYTECYITNVSSQWTSSELKKTIPENILLYRVVHVLKPIMMNVHLSVVALETLIFCLSFMMAIGNSFYVMVSDIVFGAINLYLILPIIWYFVTEFWLSKYLPRQFGFYFGVLVASIILILPVVRYDKIFVAAQIHRAVSINIAMIPLCALVALLVRACRVYTDRKKIAYTALPSKPQTIKYTKPIEPSTKQAPDSSIFLEEESDTDFEQ.

The Intravirion portion of the chain corresponds to 1-16 (MKSSKKDIFILHIWLK). The helical transmembrane segment at 17–37 (LMGCYVFMFITSVVLPIAAMF) threads the bilayer. The Virion surface portion of the chain corresponds to 38–82 (PNLGFPCYYNTLVDYSKLNLREKNQAQHLTPTLFLEAPEMFFYVT). A helical transmembrane segment spans residues 83-103 (YSFIVDCCSLVYYALAAVAVV). The Intravirion portion of the chain corresponds to 104–117 (KAKKHAPGLMALSQ). A helical membrane pass occupies residues 118 to 138 (WIMAVGSPTLLYMAVLKLWTI). Topologically, residues 139–149 (QLYIHTLSYKH) are virion surface. Residues 150–170 (IYLAAFVYCLHWLLSMVYTEC) traverse the membrane as a helical segment. Topologically, residues 171–207 (YITNVSSQWTSSELKKTIPENILLYRVVHVLKPIMMN) are intravirion. Residues 208 to 228 (VHLSVVALETLIFCLSFMMAI) form a helical membrane-spanning segment. Over 229–238 (GNSFYVMVSD) the chain is Virion surface. A helical transmembrane segment spans residues 239–259 (IVFGAINLYLILPIIWYFVTE). Residues 260–269 (FWLSKYLPRQ) lie on the Intravirion side of the membrane. A helical transmembrane segment spans residues 270–290 (FGFYFGVLVASIILILPVVRY). Over 291 to 301 (DKIFVAAQIHR) the chain is Virion surface. Residues 302–322 (AVSINIAMIPLCALVALLVRA) traverse the membrane as a helical segment. Topologically, residues 323–374 (CRVYTDRKKIAYTALPSKPQTIKYTKPIEPSTKQAPDSSIFLEEESDTDFEQ) are intravirion. A disordered region spans residues 345-374 (KYTKPIEPSTKQAPDSSIFLEEESDTDFEQ). Over residues 364 to 374 (LEEESDTDFEQ) the composition is skewed to acidic residues.

This sequence belongs to the herpesviridae glycoprotein M family. Interacts (via N-terminus) with gN (via N-terminus). The gM-gN heterodimer forms the gCII complex.

Its subcellular location is the virion membrane. It is found in the host Golgi apparatus. The protein resides in the host trans-Golgi network. It localises to the host endosome membrane. The protein localises to the host nucleus inner membrane. In terms of biological role, envelope glycoprotein important for virion assembly and egress. Plays a role in the correct incorporation of gH-gL into virion membrane. Directs the glycoprotein N (gN) to the host trans-Golgi network. The protein is Envelope glycoprotein M of Connochaetes taurinus (Blue wildebeest).